A 291-amino-acid chain; its full sequence is Feruloyl esterase B (291 aa).

The signal sequence occupies residues 1–18 (MLVRSFLGFAVLAATCLA). A glycan (N-linked (GlcNAc...) asparagine) is linked at Asn-117. Ser-136 serves as the catalytic Charge relay system. N-linked (GlcNAc...) asparagine glycosylation occurs at Asn-179.

This sequence belongs to the carbohydrate esterase 1 (CE1) family. Feruloyl esterase type B subfamily.

The protein resides in the secreted. The enzyme catalyses feruloyl-polysaccharide + H2O = ferulate + polysaccharide.. Feruloyl esterase which acts in synergy with xylanases in degradation of plant cell walls. Hydrolyzes the ester linkage of hydroxycinnamic acids (ferulic acid (FA) and p-coumaric acid) and diferulates present in plant cell walls. Is active on substrates containing ferulic acid ester linked to the C-5 and C-2 linkages of arabinofuranose, while it was found capable of de-esterifying acetylated glucuronoxylans. Efficiently releases ferulic acid (FA) from destarched wheat bran when incubated with an M3 xylanase. The protein is Feruloyl esterase B (Fae1a) of Thermothelomyces thermophilus (strain ATCC 42464 / BCRC 31852 / DSM 1799) (Sporotrichum thermophile).